A 133-amino-acid polypeptide reads, in one-letter code: UPF0344 protein SE_0666 (133 aa).

4 consecutive transmembrane segments (helical) span residues 1–21, 42–62, 71–91, and 103–123; these read MLHV…ATYL, LFML…FMAA, MLLT…EISI, and FFWI…ILPW.

Belongs to the UPF0344 family.

The protein localises to the cell membrane. The protein is UPF0344 protein SE_0666 of Staphylococcus epidermidis (strain ATCC 12228 / FDA PCI 1200).